The sequence spans 226 residues: Thymidylate kinase (226 aa).

Residue 20-27 (GGEGAGKS) participates in ATP binding.

Belongs to the thymidylate kinase family.

It carries out the reaction dTMP + ATP = dTDP + ADP. Functionally, phosphorylation of dTMP to form dTDP in both de novo and salvage pathways of dTTP synthesis. The protein is Thymidylate kinase of Bradyrhizobium sp. (strain BTAi1 / ATCC BAA-1182).